The following is a 356-amino-acid chain: tRNA N6-adenosine threonylcarbamoyltransferase (356 aa).

2 residues coordinate Fe cation: His-115 and His-119. Substrate-binding positions include 137-141 (LVSGG), Asp-170, Gly-183, and Asn-280. Asp-308 contacts Fe cation.

This sequence belongs to the KAE1 / TsaD family. Fe(2+) is required as a cofactor.

It is found in the cytoplasm. It catalyses the reaction L-threonylcarbamoyladenylate + adenosine(37) in tRNA = N(6)-L-threonylcarbamoyladenosine(37) in tRNA + AMP + H(+). Its function is as follows. Required for the formation of a threonylcarbamoyl group on adenosine at position 37 (t(6)A37) in tRNAs that read codons beginning with adenine. Is involved in the transfer of the threonylcarbamoyl moiety of threonylcarbamoyl-AMP (TC-AMP) to the N6 group of A37, together with TsaE and TsaB. TsaD likely plays a direct catalytic role in this reaction. The polypeptide is tRNA N6-adenosine threonylcarbamoyltransferase (Paracoccus denitrificans (strain Pd 1222)).